We begin with the raw amino-acid sequence, 580 residues long: Myb-like protein C (580 aa).

Disordered regions lie at residues 1–58, 73–101, 121–203, and 354–380; these read MTMI…YGSN, QYSISSPSPKKRPFNSTMTTSPPTPTLLS, NVYN…SSTN, and SDNDSNQKKKRERIRKSVSRGLRNPPN. 3 stretches are compositionally biased toward low complexity: residues 20 to 47, 87 to 101, and 126 to 203; these read NNNNNNSNNSSNNNSNNNSNNNNNNNNN, NSTMTTSPPTPTLLS, and PHQS…SSTN. A compositionally biased stretch (basic residues) spans 361–371; that stretch reads KKKRERIRKSV. 2 consecutive HTH myb-type domains span residues 368–430 and 431–482; these read RKSV…CPAI and RKGS…SREV. 2 DNA-binding regions (H-T-H motif) span residues 402–426 and 454–478; these read WKKIAHQIGGGKTGAQCAQHWKRVL and WKNVASEIRTRTDIQCRYQYFKSCM. Positions 484 to 546 constitute a Myb-like domain; the sequence is WSSREDEILQ…ECKTRYFQLN (63 aa).

The protein localises to the nucleus. Functionally, transcription activator required for the culmination, at the time of the fruiting body formation. Regulates genes involved in the cell differentiation within the fruiting body. In Dictyostelium discoideum (Social amoeba), this protein is Myb-like protein C (mybC).